The chain runs to 403 residues: Aloesone synthase (403 aa).

Residue Cys-174 is part of the active site. Residues Ser-281 and 318 to 321 each bind CoA; that span reads GGRA.

The protein belongs to the thiolase-like superfamily. Chalcone/stilbene synthases family. As to quaternary structure, homodimer.

It functions in the pathway secondary metabolite biosynthesis; flavonoid biosynthesis. Catalyzes the iterative condensations of 6, 7 or 8 molecules of malonyl-CoA to produce various aromatic polyketides. Produces the heptaketide aloesone, the aglycone of aloesin, from 7 molecules of malonyl-CoA as a major product. Also able to produce a hexaketide pyrone, a heptaketide 6-(2-acetyl-3,5-dihydroxybenzyl)-4-hydroxy-2-pyrone, a novel heptaketide 6-(2-(2,4-dihydroxy-6-methylphenyl)-2-oxoethyl)-4-hydroxy-2-pyrone and octaketides SEK4/SEK4b. The protein is Aloesone synthase (PKS3) of Aloe arborescens (Kidachi aloe).